We begin with the raw amino-acid sequence, 113 residues long: Teretoxin Tan14.1 (113 aa).

Positions 1–21 (MALEAQMTLRMFVLVAMASTV) are cleaved as a signal peptide. Residues 22 to 86 (HVLSSSFSED…DETSSRTGKR (65 aa)) constitute a propeptide that is removed on maturation.

The protein belongs to the teretoxin N (TN) superfamily. Post-translationally, contains 2 disulfide bonds. As to expression, expressed by the venom duct.

The protein localises to the secreted. The protein is Teretoxin Tan14.1 of Terebra anilis (Auger snail).